Here is a 359-residue protein sequence, read N- to C-terminus: UDP-3-O-acylglucosamine N-acyltransferase (359 aa).

Histidine 248 (proton acceptor) is an active-site residue.

The protein belongs to the transferase hexapeptide repeat family. LpxD subfamily. In terms of assembly, homotrimer.

It carries out the reaction a UDP-3-O-[(3R)-3-hydroxyacyl]-alpha-D-glucosamine + a (3R)-hydroxyacyl-[ACP] = a UDP-2-N,3-O-bis[(3R)-3-hydroxyacyl]-alpha-D-glucosamine + holo-[ACP] + H(+). It participates in bacterial outer membrane biogenesis; LPS lipid A biosynthesis. Catalyzes the N-acylation of UDP-3-O-acylglucosamine using 3-hydroxyacyl-ACP as the acyl donor. Is involved in the biosynthesis of lipid A, a phosphorylated glycolipid that anchors the lipopolysaccharide to the outer membrane of the cell. This Chlamydia felis (strain Fe/C-56) (Chlamydophila felis) protein is UDP-3-O-acylglucosamine N-acyltransferase.